The chain runs to 592 residues: Prospero homeobox protein 2 (592 aa).

5 disordered regions span residues 20–56 (EACT…PEWF), 85–129 (GNAQ…RKGG), 155–218 (KPRD…LPSG), 308–336 (RLDS…PLTA), and 353–382 (RYNN…LRPW). The segment covering 95-106 (CPKKARERKRKQ) has biased composition (basic residues). A compositionally biased stretch (basic and acidic residues) spans 201-211 (SGAEKHQESEK). A compositionally biased stretch (pro residues) spans 314 to 331 (YPIPPRMTPKPCQDPPAN). Positions 360–377 (SSSPPQDSSSQRHPSSEP) are enriched in low complexity. In terms of domain architecture, Prospero-type homeo spans 437 to 495 (QEGLNPGHLKKAKLMFFFTRYPSSNLLKVYFPDVQFNRCITSQMIKWFSNFREFYYIQM). Residues 437 to 592 (QEGLNPGHLK…EIFKSSSYPQ (156 aa)) form a homeo-Prospero region. The Prospero domain occupies 496-592 (EKSARQAISD…EIFKSSSYPQ (97 aa)).

Belongs to the Prospero homeodomain family.

Its subcellular location is the nucleus. Its function is as follows. Transcription regulator. Does not seem to be essential for embryonic development and postnatal survival. This Homo sapiens (Human) protein is Prospero homeobox protein 2 (PROX2).